The chain runs to 808 residues: DNA replication licensing factor MCM3 (808 aa).

Alanine 2 carries the N-acetylalanine modification. Residues serine 160 and serine 275 each carry the phosphoserine modification. Lysine 293 is modified (N6-acetyllysine). Residues 295–502 (IFDQLARSLA…QDREISDHVL (208 aa)) form the MCM domain. The ADP site is built by glutamine 353, leucine 393, glutamate 394, alanine 395, and alanine 397. The Arginine finger motif lies at 477–480 (SRFD). Alanine 523 contacts ATP. At serine 535 the chain carries Phosphoserine; by ATM. Lysine 547 is modified (N6-acetyllysine). Serine 611 carries the post-translational modification Phosphoserine. Residues 662-738 (KKRKKRSEDE…QETKESQKVE (77 aa)) form a disordered region. Arginine 664 contributes to the ATP binding site. Phosphoserine occurs at positions 668 and 672. 2 stretches are compositionally biased toward acidic residues: residues 670–681 (DESETEDEEEKS) and 704–717 (SYDPYDFSDTEEEM). Threonine 674 bears the Phosphothreonine mark. Serine 681 carries the post-translational modification Phosphoserine. Tyrosine 708 is subject to Phosphotyrosine. Position 711 is a phosphoserine (serine 711). Phosphothreonine occurs at positions 713, 722, and 725. A compositionally biased stretch (basic and acidic residues) spans 727–738 (DSQETKESQKVE). Phosphoserine is present on residues serine 728 and serine 734.

This sequence belongs to the MCM family. As to quaternary structure, component of the MCM2-7 complex. The complex forms a toroidal hexameric ring with the proposed subunit order MCM2-MCM6-MCM4-MCM7-MCM3-MCM5. Component of the CMG helicase complex, a hexameric ring of related MCM2-7 subunits stabilized by CDC45 and the tetrameric GINS complex. Associated with the replication-specific DNA polymerase alpha. Interacts with MCMBP. Interacts with ANKRD17. Interacts with MCM3AP isoform MCM3AP; this interaction leads to MCM3 acetylation. Post-translationally, acetylated by MCM3AP. O-glycosylated (O-GlcNAcylated), in a cell cycle-dependent manner.

It localises to the nucleus. It is found in the chromosome. It carries out the reaction ATP + H2O = ADP + phosphate + H(+). Acts as a component of the MCM2-7 complex (MCM complex) which is the replicative helicase essential for 'once per cell cycle' DNA replication initiation and elongation in eukaryotic cells. Core component of CDC45-MCM-GINS (CMG) helicase, the molecular machine that unwinds template DNA during replication, and around which the replisome is built. The active ATPase sites in the MCM2-7 ring are formed through the interaction surfaces of two neighboring subunits such that a critical structure of a conserved arginine finger motif is provided in trans relative to the ATP-binding site of the Walker A box of the adjacent subunit. The six ATPase active sites, however, are likely to contribute differentially to the complex helicase activity. Required for the entry in S phase and for cell division. The sequence is that of DNA replication licensing factor MCM3 (MCM3) from Pongo abelii (Sumatran orangutan).